Consider the following 886-residue polypeptide: Peptidyl-lysine N-acetyltransferase PatZ (886 aa).

Residues 487-523 (QPILQAYGMNTLPTWIASDSTEAVHIAEQIGYPVALK) enclose the ATP-grasp domain. The N-acetyltransferase domain occupies 726–881 (CLFRPILPED…GIVGLTLNLA (156 aa)).

This sequence in the N-terminal section; belongs to the acetate CoA ligase alpha subunit family. In the central section; belongs to the acetate CoA ligase beta subunit family. Stable tetramer in solution. Oligomerizes to an octameric form by autoacetylation. Post-translationally, autoacetylated. Deacetylated by CobB.

The enzyme catalyses L-lysyl-[protein] + acetyl-CoA = N(6)-acetyl-L-lysyl-[protein] + CoA + H(+). Functionally, catalyzes the acetyl-CoA-dependent acetylation of lysine residues of a large number of target proteins. Acetylates RNase R in exponential phase cells and RNase II. Required for the glucose-dependent acetylation on multiple lysines of alpha, beta and beta' RNAP subunits. Also acetylates acetyl-coenzyme A synthetase (Acs) and the chromosomal replication initiator protein DnaA, and inhibits their activity. Overexpression leads to the acetylation of a large number of additional proteins and inhibits motility. In Escherichia coli (strain K12), this protein is Peptidyl-lysine N-acetyltransferase PatZ.